Reading from the N-terminus, the 194-residue chain is Imidazoleglycerol-phosphate dehydratase (194 aa).

Belongs to the imidazoleglycerol-phosphate dehydratase family.

Its subcellular location is the cytoplasm. It carries out the reaction D-erythro-1-(imidazol-4-yl)glycerol 3-phosphate = 3-(imidazol-4-yl)-2-oxopropyl phosphate + H2O. It participates in amino-acid biosynthesis; L-histidine biosynthesis; L-histidine from 5-phospho-alpha-D-ribose 1-diphosphate: step 6/9. The sequence is that of Imidazoleglycerol-phosphate dehydratase from Listeria monocytogenes serotype 4b (strain F2365).